Reading from the N-terminus, the 408-residue chain is CinA-like protein (408 aa).

This sequence belongs to the CinA family.

The protein is CinA-like protein of Thermotoga sp. (strain RQ2).